Here is a 347-residue protein sequence, read N- to C-terminus: Transcription elongation factor A protein 3 (347 aa).

The TFIIS N-terminal domain occupies 5–82; it reads EELLRIAKKL…KNWKRLLDSP (78 aa). Basic and acidic residues predominate over residues 83-100; that stretch reads RTTKGEREEREKAKKEKG. A disordered region spans residues 83–168; the sequence is RTTKGEREER…TTPSSPSTPT (86 aa). At S113 the chain carries Phosphoserine. The segment covering 119 to 131 has biased composition (basic and acidic residues); the sequence is GGGEPKTRRDSVD. 2 stretches are compositionally biased toward low complexity: residues 132–142 and 157–168; these read SRSSTTSSPKR and TPTTPSSPSTPT. At S139 the chain carries Phosphoserine. Residues 186–302 form the TFIIS central domain; the sequence is VRDKCVEMLS…EHQMAKTGGT (117 aa). A TFIIS-type zinc finger spans residues 305–345; that stretch reads DLLRCSKCKKKNCTYNQVQTRSADEPMTTFVLCNECGNRWK. The Zn(2+) site is built by C309, C312, C337, and C340.

The protein belongs to the TFS-II family. As to expression, liver, kidney and heart.

The protein localises to the nucleus. In terms of biological role, necessary for efficient RNA polymerase II transcription elongation past template-encoded arresting sites. The arresting sites in DNA have the property of trapping a certain fraction of elongating RNA polymerases that pass through, resulting in locked ternary complexes. Cleavage of the nascent transcript by S-II allows the resumption of elongation from the new 3'-terminus. This is Transcription elongation factor A protein 3 (Tcea3) from Mus musculus (Mouse).